The sequence spans 98 residues: NADH-ubiquinone oxidoreductase chain 4L (98 aa).

3 helical membrane-spanning segments follow: residues 1 to 21 (MPST…GLLL), 29 to 49 (SLLC…LMAL), and 61 to 81 (IVLM…LVMV).

Belongs to the complex I subunit 4L family. In terms of assembly, core subunit of respiratory chain NADH dehydrogenase (Complex I) which is composed of 45 different subunits.

The protein resides in the mitochondrion inner membrane. The catalysed reaction is a ubiquinone + NADH + 5 H(+)(in) = a ubiquinol + NAD(+) + 4 H(+)(out). Its function is as follows. Core subunit of the mitochondrial membrane respiratory chain NADH dehydrogenase (Complex I) which catalyzes electron transfer from NADH through the respiratory chain, using ubiquinone as an electron acceptor. Part of the enzyme membrane arm which is embedded in the lipid bilayer and involved in proton translocation. The polypeptide is NADH-ubiquinone oxidoreductase chain 4L (MT-ND4L) (Choloepus didactylus (Southern two-toed sloth)).